The primary structure comprises 336 residues: Holliday junction branch migration complex subunit RuvB (336 aa).

The segment at 4 to 184 is large ATPase domain (RuvB-L); sequence ADRLISATGV…FGIVQRLEFY (181 aa). Residues Ile-23, Arg-24, Gly-65, Lys-68, Thr-69, Thr-70, 131–133, Arg-174, Tyr-184, and Arg-221 each bind ATP; that span reads EDY. Thr-69 contacts Mg(2+). The small ATPAse domain (RuvB-S) stretch occupies residues 185 to 255; sequence NVKDLTDIVS…IAARAMDMLD (71 aa). Residues 258–336 are head domain (RuvB-H); the sequence is NEGFDFMDRK…HFGLQRPDER (79 aa). The DNA site is built by Arg-313 and Arg-318.

The protein belongs to the RuvB family. Homohexamer. Forms an RuvA(8)-RuvB(12)-Holliday junction (HJ) complex. HJ DNA is sandwiched between 2 RuvA tetramers; dsDNA enters through RuvA and exits via RuvB. An RuvB hexamer assembles on each DNA strand where it exits the tetramer. Each RuvB hexamer is contacted by two RuvA subunits (via domain III) on 2 adjacent RuvB subunits; this complex drives branch migration. In the full resolvosome a probable DNA-RuvA(4)-RuvB(12)-RuvC(2) complex forms which resolves the HJ.

It is found in the cytoplasm. The catalysed reaction is ATP + H2O = ADP + phosphate + H(+). Its function is as follows. The RuvA-RuvB-RuvC complex processes Holliday junction (HJ) DNA during genetic recombination and DNA repair, while the RuvA-RuvB complex plays an important role in the rescue of blocked DNA replication forks via replication fork reversal (RFR). RuvA specifically binds to HJ cruciform DNA, conferring on it an open structure. The RuvB hexamer acts as an ATP-dependent pump, pulling dsDNA into and through the RuvAB complex. RuvB forms 2 homohexamers on either side of HJ DNA bound by 1 or 2 RuvA tetramers; 4 subunits per hexamer contact DNA at a time. Coordinated motions by a converter formed by DNA-disengaged RuvB subunits stimulates ATP hydrolysis and nucleotide exchange. Immobilization of the converter enables RuvB to convert the ATP-contained energy into a lever motion, pulling 2 nucleotides of DNA out of the RuvA tetramer per ATP hydrolyzed, thus driving DNA branch migration. The RuvB motors rotate together with the DNA substrate, which together with the progressing nucleotide cycle form the mechanistic basis for DNA recombination by continuous HJ branch migration. Branch migration allows RuvC to scan DNA until it finds its consensus sequence, where it cleaves and resolves cruciform DNA. This is Holliday junction branch migration complex subunit RuvB from Aeromonas salmonicida (strain A449).